The sequence spans 205 residues: SCO2-like protein RF_0960 (205 aa).

Cu cation-binding residues include Cys-82, Cys-86, and His-172.

It belongs to the SCO1/2 family.

The protein is SCO2-like protein RF_0960 of Rickettsia felis (strain ATCC VR-1525 / URRWXCal2) (Rickettsia azadi).